The sequence spans 453 residues: GTPase Der (453 aa).

EngA-type G domains are found at residues 3–167 and 188–361; these read PIIV…INSK and VKIA…HTSQ. GTP is bound by residues 9-16, 57-61, 119-122, 194-201, 241-245, and 306-309; these read GRTNVGKS, DTAGI, NKID, GKPNVGKS, DTAGM, and NKCD. Positions 362–446 constitute a KH-like domain; it reads KKIKTSQVMK…PIKIQFKETM (85 aa).

It belongs to the TRAFAC class TrmE-Era-EngA-EngB-Septin-like GTPase superfamily. EngA (Der) GTPase family. In terms of assembly, associates with the 50S ribosomal subunit.

In terms of biological role, GTPase that plays an essential role in the late steps of ribosome biogenesis. This is GTPase Der from Buchnera aphidicola subsp. Schizaphis graminum (strain Sg).